The primary structure comprises 961 residues: Vinculin (961 aa).

2 tandem repeats follow at residues 258-362 (ELDN…MGEL) and 371-470 (LGVD…ELKA). The tract at residues 258–470 (ELDNLTVLKK…LTQKLYELKA (213 aa)) is 2 X repeats. A disordered region spans residues 720 to 778 (AIAPPQPPPLPTSLPPPIPELSALHLSNQNAERAPPRPPLPREGLAPVRPPPPETDDED). Over residues 723–738 (PPQPPPLPTSLPPPIP) the composition is skewed to pro residues. Threonine 774 carries the post-translational modification Phosphothreonine.

It belongs to the vinculin/alpha-catenin family. As to quaternary structure, exhibits self-association properties.

The protein localises to the cytoplasm. The protein resides in the cytoskeleton. It localises to the cell junction. It is found in the adherens junction. Its subcellular location is the cell membrane. Its function is as follows. Involved in cell adhesion. May be involved in the attachment of the actin-based microfilaments to the plasma membrane. The polypeptide is Vinculin (Vinc) (Drosophila melanogaster (Fruit fly)).